A 375-amino-acid chain; its full sequence is 4-hydroxy-3-methylbut-2-en-1-yl diphosphate synthase (flavodoxin) (375 aa).

4 residues coordinate [4Fe-4S] cluster: C270, C273, C305, and E312.

Belongs to the IspG family. Requires [4Fe-4S] cluster as cofactor.

The enzyme catalyses (2E)-4-hydroxy-3-methylbut-2-enyl diphosphate + oxidized [flavodoxin] + H2O + 2 H(+) = 2-C-methyl-D-erythritol 2,4-cyclic diphosphate + reduced [flavodoxin]. It participates in isoprenoid biosynthesis; isopentenyl diphosphate biosynthesis via DXP pathway; isopentenyl diphosphate from 1-deoxy-D-xylulose 5-phosphate: step 5/6. Converts 2C-methyl-D-erythritol 2,4-cyclodiphosphate (ME-2,4cPP) into 1-hydroxy-2-methyl-2-(E)-butenyl 4-diphosphate. This is 4-hydroxy-3-methylbut-2-en-1-yl diphosphate synthase (flavodoxin) from Yersinia pseudotuberculosis serotype IB (strain PB1/+).